Here is a 187-residue protein sequence, read N- to C-terminus: uncharacterized protein (187 aa).

The region spanning 53-187 (RKPHIYSPAD…CLQTSYVVPG (135 aa)) is the Tyr recombinase domain. Active-site residues include Arg-98 and Lys-123.

This sequence belongs to the 'phage' integrase family.

This is an uncharacterized protein from Sinorhizobium fredii (strain NBRC 101917 / NGR234).